The following is a 90-amino-acid chain: Probable Fe(2+)-trafficking protein (90 aa).

Belongs to the Fe(2+)-trafficking protein family.

Functionally, could be a mediator in iron transactions between iron acquisition and iron-requiring processes, such as synthesis and/or repair of Fe-S clusters in biosynthetic enzymes. The polypeptide is Probable Fe(2+)-trafficking protein (Pseudomonas fluorescens (strain SBW25)).